Reading from the N-terminus, the 268-residue chain is Microtubule-associated protein RP/EB family member 1 (268 aa).

An N-acetylalanine modification is found at Ala2. Residues 14–116 form the Calponin-homology (CH) domain; the sequence is NLSRHDMLAW…FVQWFKKFFD (103 aa). At Lys66 the chain carries N6-crotonyllysine. Tyr124 is subject to Phosphotyrosine. An interaction with MTUS2/TIP150 region spans residues 124 to 268; the sequence is YDPVAARQGQ…GGPQEEQEEY (145 aa). Low complexity predominate over residues 146–160; that stretch reads LNKPKKPLSSSSAAP. The interval 146–191 is disordered; sequence LNKPKKPLSSSSAAPQRPISTQRTAAAPKAGPGVVRKNPGVGNGDD. A phosphoserine mark is found at Ser155 and Ser165. Positions 185-255 constitute an EB1 C-terminal domain; the sequence is GVGNGDDEAA…LYATDEGFVI (71 aa). The tract at residues 185–268 is interaction with CDK5RAP2; that stretch reads GVGNGDDEAA…GGPQEEQEEY (84 aa). The segment at 206-211 is interaction with APC; that stretch reads TVEDLE. The segment at 208-268 is DCTN1-binding; sequence EDLEKERDFY…GGPQEEQEEY (61 aa). Lys220 bears the N6-acetyllysine mark. The interval 220–242 is APC-binding; sequence KLRNIELICQENEGENDPVLQRI. An interaction with SKA1 region spans residues 232-255; it reads EGENDPVLQRIVDILYATDEGFVI.

Belongs to the MAPRE family. In terms of assembly, homodimer. Heterodimer with MAPRE3. Interacts with DCTN1, DCTN2, TERF1 and dynein intermediate chain. Interaction with DIAPH1 and DIAPH2. Interacts (via C-terminal residues 206-211) with APC (via C-terminal residues 2674-2845); the interaction inhibits association with and bundling of F-actin. Interacts with CLASP2, DST, KIF2C and STIM1; probably required for their targeting to the growing microtubule plus ends. Interacts with MTUS2; interaction is direct and probably targets MTUS2 to microtubules. Interacts (via C-terminus) with SKA1 (via SXIP motif); the interaction is direct and stabilizes the kinetochore-microtubule attachment of the SKA1 complex. Interacts with APC2. Interacts with CLASP1. Interacts with CDK5RAP2. Interacts with MACF1. Interacts with RABL2/RABL2A; binds preferentially to GTP-bound RABL2. Interacts with KCNAB2. Interacts (via C-terminus) with CLIP1. Interacts with SLAIN2 and SLAIN1. Interacts with KIF18B; this interaction is required for efficient accumulation of KIF18B at microtubule plus ends. Interacts with MISP. Interacts with KNSTRN. Interacts with NCKAP5L. Interacts with CAMSAP2. Interacts with PDE4DIP isoform 13/MMG8/SMYLE; this interaction is required for its recruitment to the Golgi apparatus. Forms a pericentrosomal complex with AKAP9, CDK5RAP2 and PDE4DIP isoform 13/MMG8/SMYLE; within this complex, MAPRE1 binding to CDK5RAP2 may be mediated by PDE4DIP. Interacts with AKNA. Interacts with GAS2L1, GAS2L2, and GAS2L3. Interacts with RARRES1 and AGBL2. In terms of processing, acetylation at Lys-220 by KAT2B/PCAF promotes dynamic kinetochore-microtubule interactions in early mitosis. Crotonylated by KAT5 during mitosis, promoting astral microtubule plasticity and dynamic connection between astral microtubules and the cortex during mitotic chromosome segregation, thereby ensuring accurate spindle positioning in mitosis. Decrotonylated by HDAC3.

The protein resides in the cytoplasm. The protein localises to the cytoskeleton. It localises to the microtubule organizing center. Its subcellular location is the centrosome. It is found in the golgi apparatus. The protein resides in the spindle. The protein localises to the spindle pole. Functionally, plus-end tracking protein (+TIP) that binds to the plus-end of microtubules and regulates the dynamics of the microtubule cytoskeleton. Recruits other +TIP proteins to microtubules by binding to a conserved Ser-X-Leu-Pro (SXLP) motif in their polypeptide chains. Promotes cytoplasmic microtubule nucleation and elongation. Involved in mitotic spindle positioning by stabilizing microtubules and promoting dynamic connection between astral microtubules and the cortex during mitotic chromosome segregation. Assists chromosome alignment in metaphase by recruiting the SKA complex to the spindle and stabilizing its interactions with microtubule bundles (K-fibers). Also acts as a regulator of minus-end microtubule organization: interacts with the complex formed by AKAP9 and PDE4DIP, leading to recruit CAMSAP2 to the Golgi apparatus, thereby tethering non-centrosomal minus-end microtubules to the Golgi, an important step for polarized cell movement. Promotes elongation of CAMSAP2-decorated microtubule stretches on the minus-end of microtubules. Acts as a regulator of autophagosome transport via interaction with CAMSAP2. Functions downstream of Rho GTPases and DIAPH1 in stable microtubule formation. May play a role in cell migration. In Pongo abelii (Sumatran orangutan), this protein is Microtubule-associated protein RP/EB family member 1 (MAPRE1).